The chain runs to 79 residues: RNA-binding protein Hfq (79 aa).

The 61-residue stretch at 10-70 (DVFLNTVRKQ…ISTIMPGQPV (61 aa)) folds into the Sm domain.

Belongs to the Hfq family. In terms of assembly, homohexamer.

Functionally, RNA chaperone that binds small regulatory RNA (sRNAs) and mRNAs to facilitate mRNA translational regulation in response to envelope stress, environmental stress and changes in metabolite concentrations. Also binds with high specificity to tRNAs. The chain is RNA-binding protein Hfq from Bartonella tribocorum (strain CIP 105476 / IBS 506).